The primary structure comprises 498 residues: uncharacterized protein (498 aa).

Residue 329 to 336 coordinates ATP; that stretch reads GNPGTGKS.

The protein resides in the secreted. It is found in the cell wall. This is an uncharacterized protein from Mycobacterium tuberculosis (strain CDC 1551 / Oshkosh).